The primary structure comprises 741 residues: MVELDADLDHIVPSVLPPFWAKLVVGFVSLLCFARSYDGDFVFDDSEAIVNNKDLQSDTPLGDLWHHDFWGSKLSSNTSHKSYRPLTVLTFRINYYLSGGFHPVGFHVVNILLHGSISILMLDVFSVLFGGLQYTGKGQRVHLAPRASLLATLLFAVHPVHTECVAGVVGRADLLCALFFLLSFLGYCQAFKETGNKEGTHSSTFWVLLSIFLGAVAMLCKEQGITVLGLNAVFDILVIGKLDILAAVRKVLHKDKSQENAGMFKNGGLLFRIALLTIGGTSMLYIRWKIMGTGPPAFTEVDNPASFADSMLVRAINYNYYYSLNAWLLLCPWWLCFDWSMGCIPLIKSVGDWRVIALAALWLCLIGLIFQALCSEDSCKRRILTLGLGFLVIPFLPASNLFFRVGFVVAERVLYLPSAGYCVLLTFGFGALSRHTKKKKPVAAIILGILLINALRCVIRSGEWRSEEQLFRSALSVCPLNAKVHYNIGKNLADQGNQTAAIKYYREAVRLNPKYVHAMNNLGNILKERNELQEAEELLSLAVQIQPDFAAAWMNLGIVQNSLKRFEEAEQSYRTAIKHRRKYPDCYYNLGRLYADLNRHVDALNAWRNATVLKPEHSLAWNNMIILLDNTGNLAQAEAVGREALQLIPNDHSLMFSLANVLGKSQKYKESEALFLKAIKANPNVASYHGNLAVLYHRWGHLDSAKKHYEISLQLDPVAVGTKENYSLLRRKLEQTQKKDV.

Over 1–10 (MVELDADLDH) the chain is Cytoplasmic. Residues 11-31 (IVPSVLPPFWAKLVVGFVSLL) form a helical membrane-spanning segment. At 32–110 (CFARSYDGDF…FHPVGFHVVN (79 aa)) the chain is on the extracellular side. The N-linked (GlcNAc...) asparagine glycan is linked to Asn77. A helical membrane pass occupies residues 111-131 (ILLHGSISILMLDVFSVLFGG). The Cytoplasmic portion of the chain corresponds to 132 to 146 (LQYTGKGQRVHLAPR). Helical transmembrane passes span 147–166 (ASLL…ECVA) and 167–185 (GVVG…LSFL). Topologically, residues 186-198 (GYCQAFKETGNKE) are cytoplasmic. The helical transmembrane segment at 199–219 (GTHSSTFWVLLSIFLGAVAML) threads the bilayer. Residues 220-224 (CKEQG) lie on the Extracellular side of the membrane. The helical transmembrane segment at 225–245 (ITVLGLNAVFDILVIGKLDIL) threads the bilayer. Over 246-265 (AAVRKVLHKDKSQENAGMFK) the chain is Cytoplasmic. Residues 266-286 (NGGLLFRIALLTIGGTSMLYI) form a helical membrane-spanning segment. The Extracellular segment spans residues 287 to 354 (RWKIMGTGPP…PLIKSVGDWR (68 aa)). Residues 355–375 (VIALAALWLCLIGLIFQALCS) form a helical membrane-spanning segment. At 376 to 382 (EDSCKRR) the chain is on the cytoplasmic side. Residues 383-403 (ILTLGLGFLVIPFLPASNLFF) form a helical membrane-spanning segment. Residues 404–412 (RVGFVVAER) are Extracellular-facing. The chain crosses the membrane as a helical span at residues 413–433 (VLYLPSAGYCVLLTFGFGALS). Topologically, residues 434-441 (RHTKKKKP) are cytoplasmic. The chain crosses the membrane as a helical span at residues 442 to 462 (VAAIILGILLINALRCVIRSG). At 463–741 (EWRSEEQLFR…KLEQTQKKDV (279 aa)) the chain is on the extracellular side. 7 TPR repeats span residues 482 to 515 (AKVH…NPKY), 516 to 549 (VHAM…QPDF), 550 to 583 (AAAW…RRKY), 584 to 617 (PDCY…KPEH), 618 to 651 (SLAW…IPND), 652 to 685 (HSLM…NPNV), and 686 to 719 (ASYH…DPVA). N-linked (GlcNAc...) asparagine glycosylation occurs at Asn497. Asn609 carries an N-linked (GlcNAc...) asparagine glycan. Asn725 carries N-linked (GlcNAc...) asparagine glycosylation.

It belongs to the TMTC family.

The protein resides in the membrane. It localises to the endoplasmic reticulum. It carries out the reaction a di-trans,poly-cis-dolichyl beta-D-mannosyl phosphate + L-seryl-[protein] = 3-O-(alpha-D-mannosyl)-L-seryl-[protein] + a di-trans,poly-cis-dolichyl phosphate + H(+). It catalyses the reaction a di-trans,poly-cis-dolichyl beta-D-mannosyl phosphate + L-threonyl-[protein] = 3-O-(alpha-D-mannosyl)-L-threonyl-[protein] + a di-trans,poly-cis-dolichyl phosphate + H(+). It participates in protein modification; protein glycosylation. Its function is as follows. Transfers mannosyl residues to the hydroxyl group of serine or threonine residues. The 4 members of the TMTC family are O-mannosyl-transferases dedicated primarily to the cadherin superfamily, each member seems to have a distinct role in decorating the cadherin domains with O-linked mannose glycans at specific regions. Also acts as O-mannosyl-transferase on other proteins such as PDIA3. This chain is Protein O-mannosyl-transferase TMTC4, found in Mus musculus (Mouse).